The primary structure comprises 79 residues: Sec-independent protein translocase protein TatA (79 aa).

A helical transmembrane segment spans residues 1–21; sequence MGEFSLTHILLLAVIFLIFFG. The segment at 52–79 is disordered; sequence DIHDNQQVSHQNKQSMGQTQKQGENQNS. A compositionally biased stretch (polar residues) spans 56-79; that stretch reads NQQVSHQNKQSMGQTQKQGENQNS.

It belongs to the TatA/E family. As to quaternary structure, the Tat system comprises two distinct complexes: a TatABC complex, containing multiple copies of TatA, TatB and TatC subunits, and a separate TatA complex, containing only TatA subunits. Substrates initially bind to the TatABC complex, which probably triggers association of the separate TatA complex to form the active translocon.

Its subcellular location is the cell inner membrane. In terms of biological role, part of the twin-arginine translocation (Tat) system that transports large folded proteins containing a characteristic twin-arginine motif in their signal peptide across membranes. TatA could form the protein-conducting channel of the Tat system. The chain is Sec-independent protein translocase protein TatA from Bdellovibrio bacteriovorus (strain ATCC 15356 / DSM 50701 / NCIMB 9529 / HD100).